Reading from the N-terminus, the 96-residue chain is Class I hydrophobin 2 (96 aa).

Residues 1–15 (MFKALIVALAAVAAA) form the signal peptide. 4 disulfide bridges follow: Cys-28/Cys-77, Cys-34/Cys-71, Cys-35/Cys-55, and Cys-78/Cys-91.

Belongs to the fungal hydrophobin family.

The protein resides in the secreted. It is found in the cell wall. Its function is as follows. Aerial growth, conidiation, and dispersal of filamentous fungi in the environment rely upon a capability of their secreting small amphipathic proteins called hydrophobins (HPBs) with low sequence identity. Class I can self-assemble into an outermost layer of rodlet bundles on aerial cell surfaces, conferring cellular hydrophobicity that supports fungal growth, development and dispersal; whereas Class II form highly ordered films at water-air interfaces through intermolecular interactions but contribute nothing to the rodlet structure. Hyd2 plays a neglectable role in hyphal growth and asexual development and does not seem involved in cellular hydrophobicity, conidial adhesion, stress tolerance nor insect pathogenicity. This chain is Class I hydrophobin 2, found in Metarhizium robertsii (strain ARSEF 23 / ATCC MYA-3075) (Metarhizium anisopliae (strain ARSEF 23)).